The sequence spans 90 residues: Cell division topological specificity factor (90 aa).

This sequence belongs to the MinE family.

In terms of biological role, prevents the cell division inhibition by proteins MinC and MinD at internal division sites while permitting inhibition at polar sites. This ensures cell division at the proper site by restricting the formation of a division septum at the midpoint of the long axis of the cell. The sequence is that of Cell division topological specificity factor from Bordetella avium (strain 197N).